Consider the following 350-residue polypeptide: Arginine N-succinyltransferase (350 aa).

Residue leucine 125 participates in succinyl-CoA binding. The active-site Proton donor is histidine 229.

The protein belongs to the arginine N-succinyltransferase family.

The catalysed reaction is succinyl-CoA + L-arginine = N(2)-succinyl-L-arginine + CoA + H(+). It functions in the pathway amino-acid degradation; L-arginine degradation via AST pathway; L-glutamate and succinate from L-arginine: step 1/5. Functionally, catalyzes the transfer of succinyl-CoA to arginine to produce N(2)-succinylarginine. The protein is Arginine N-succinyltransferase of Yersinia pestis.